The chain runs to 286 residues: ATP synthase gamma chain (286 aa).

Belongs to the ATPase gamma chain family. F-type ATPases have 2 components, CF(1) - the catalytic core - and CF(0) - the membrane proton channel. CF(1) has five subunits: alpha(3), beta(3), gamma(1), delta(1), epsilon(1). CF(0) has three main subunits: a, b and c.

The protein localises to the cell inner membrane. Produces ATP from ADP in the presence of a proton gradient across the membrane. The gamma chain is believed to be important in regulating ATPase activity and the flow of protons through the CF(0) complex. This is ATP synthase gamma chain from Shewanella oneidensis (strain ATCC 700550 / JCM 31522 / CIP 106686 / LMG 19005 / NCIMB 14063 / MR-1).